Here is a 420-residue protein sequence, read N- to C-terminus: Serine hydroxymethyltransferase (420 aa).

(6S)-5,6,7,8-tetrahydrofolate-binding positions include leucine 117 and 121 to 123; that span reads GHL. Residue lysine 226 is modified to N6-(pyridoxal phosphate)lysine.

Belongs to the SHMT family. In terms of assembly, homodimer. It depends on pyridoxal 5'-phosphate as a cofactor.

The protein localises to the cytoplasm. The catalysed reaction is (6R)-5,10-methylene-5,6,7,8-tetrahydrofolate + glycine + H2O = (6S)-5,6,7,8-tetrahydrofolate + L-serine. It functions in the pathway one-carbon metabolism; tetrahydrofolate interconversion. Its pathway is amino-acid biosynthesis; glycine biosynthesis; glycine from L-serine: step 1/1. Functionally, catalyzes the reversible interconversion of serine and glycine with tetrahydrofolate (THF) serving as the one-carbon carrier. This reaction serves as the major source of one-carbon groups required for the biosynthesis of purines, thymidylate, methionine, and other important biomolecules. Also exhibits THF-independent aldolase activity toward beta-hydroxyamino acids, producing glycine and aldehydes, via a retro-aldol mechanism. This Rhodopirellula baltica (strain DSM 10527 / NCIMB 13988 / SH1) protein is Serine hydroxymethyltransferase.